Consider the following 238-residue polypeptide: Type III pantothenate kinase (238 aa).

7 to 14 (DAGNSGLK) provides a ligand contact to ATP. Substrate contacts are provided by residues Tyr-88 and 95-98 (GVDR). The Proton acceptor role is filled by Asp-97. Residue Asp-117 participates in K(+) binding. Thr-120 serves as a coordination point for ATP. Thr-172 is a binding site for substrate.

This sequence belongs to the type III pantothenate kinase family. As to quaternary structure, homodimer. It depends on NH4(+) as a cofactor. K(+) serves as cofactor.

Its subcellular location is the cytoplasm. The catalysed reaction is (R)-pantothenate + ATP = (R)-4'-phosphopantothenate + ADP + H(+). Its pathway is cofactor biosynthesis; coenzyme A biosynthesis; CoA from (R)-pantothenate: step 1/5. Its function is as follows. Catalyzes the phosphorylation of pantothenate (Pan), the first step in CoA biosynthesis. The sequence is that of Type III pantothenate kinase from Hahella chejuensis (strain KCTC 2396).